The following is a 467-amino-acid chain: ATP synthase subunit beta (467 aa).

154 to 161 provides a ligand contact to ATP; sequence GGAGVGKT.

This sequence belongs to the ATPase alpha/beta chains family. F-type ATPases have 2 components, CF(1) - the catalytic core - and CF(0) - the membrane proton channel. CF(1) has five subunits: alpha(3), beta(3), gamma(1), delta(1), epsilon(1). CF(0) has three main subunits: a(1), b(2) and c(9-12). The alpha and beta chains form an alternating ring which encloses part of the gamma chain. CF(1) is attached to CF(0) by a central stalk formed by the gamma and epsilon chains, while a peripheral stalk is formed by the delta and b chains.

Its subcellular location is the cell inner membrane. The enzyme catalyses ATP + H2O + 4 H(+)(in) = ADP + phosphate + 5 H(+)(out). Produces ATP from ADP in the presence of a proton gradient across the membrane. The catalytic sites are hosted primarily by the beta subunits. In Leptospira interrogans serogroup Icterohaemorrhagiae serovar copenhageni (strain Fiocruz L1-130), this protein is ATP synthase subunit beta.